A 261-amino-acid chain; its full sequence is MTHQTHAYHMVNPSPWPLTGALSALLMTSGLTMWFHYNSTILLMLGLTTNMLTMYQWWRDIIRESTFQGHHTPTVQKGLRYGMILFIISEVLFFTGFFWAFYHSSLAPTPELGGCWPPTGIHPLNPLEVPLLNTSVLLASGVSITWAHHSLMEGDRNHMLQALFITIALGIYFTLLQASEYYEAPFTISDGVYGSTFFVATGFHGLHVIIGSTFLIVCFFRQLKFHFTSSHHFGFEAAAWYWHFVDVVWLFLYVSIYWWGS.

Residues M1–P15 are Mitochondrial matrix-facing. Residues W16–W34 form a helical membrane-spanning segment. The Mitochondrial intermembrane portion of the chain corresponds to F35–T40. The helical transmembrane segment at I41–T66 threads the bilayer. Over F67–T72 the chain is Mitochondrial matrix. The chain crosses the membrane as a helical span at residues P73–S105. Residues L106–E128 lie on the Mitochondrial intermembrane side of the membrane. A helical membrane pass occupies residues V129–M152. The Mitochondrial matrix segment spans residues E153–D155. A helical transmembrane segment spans residues R156–E183. The Mitochondrial intermembrane portion of the chain corresponds to A184–D190. Residues G191–L223 form a helical membrane-spanning segment. Over K224 to H232 the chain is Mitochondrial matrix. Residues F233–I256 form a helical membrane-spanning segment. Residues Y257 to S261 lie on the Mitochondrial intermembrane side of the membrane.

Belongs to the cytochrome c oxidase subunit 3 family. In terms of assembly, component of the cytochrome c oxidase (complex IV, CIV), a multisubunit enzyme composed of 14 subunits. The complex is composed of a catalytic core of 3 subunits MT-CO1, MT-CO2 and MT-CO3, encoded in the mitochondrial DNA, and 11 supernumerary subunits COX4I, COX5A, COX5B, COX6A, COX6B, COX6C, COX7A, COX7B, COX7C, COX8 and NDUFA4, which are encoded in the nuclear genome. The complex exists as a monomer or a dimer and forms supercomplexes (SCs) in the inner mitochondrial membrane with NADH-ubiquinone oxidoreductase (complex I, CI) and ubiquinol-cytochrome c oxidoreductase (cytochrome b-c1 complex, complex III, CIII), resulting in different assemblies (supercomplex SCI(1)III(2)IV(1) and megacomplex MCI(2)III(2)IV(2)).

The protein localises to the mitochondrion inner membrane. It catalyses the reaction 4 Fe(II)-[cytochrome c] + O2 + 8 H(+)(in) = 4 Fe(III)-[cytochrome c] + 2 H2O + 4 H(+)(out). Its function is as follows. Component of the cytochrome c oxidase, the last enzyme in the mitochondrial electron transport chain which drives oxidative phosphorylation. The respiratory chain contains 3 multisubunit complexes succinate dehydrogenase (complex II, CII), ubiquinol-cytochrome c oxidoreductase (cytochrome b-c1 complex, complex III, CIII) and cytochrome c oxidase (complex IV, CIV), that cooperate to transfer electrons derived from NADH and succinate to molecular oxygen, creating an electrochemical gradient over the inner membrane that drives transmembrane transport and the ATP synthase. Cytochrome c oxidase is the component of the respiratory chain that catalyzes the reduction of oxygen to water. Electrons originating from reduced cytochrome c in the intermembrane space (IMS) are transferred via the dinuclear copper A center (CU(A)) of subunit 2 and heme A of subunit 1 to the active site in subunit 1, a binuclear center (BNC) formed by heme A3 and copper B (CU(B)). The BNC reduces molecular oxygen to 2 water molecules using 4 electrons from cytochrome c in the IMS and 4 protons from the mitochondrial matrix. In Tragelaphus imberbis (Lesser kudu), this protein is Cytochrome c oxidase subunit 3 (MT-CO3).